The sequence spans 245 residues: MAMTLSTKAFAQRGVSARKNTVRVYAATTKVNPKLASKTEVERFKQATGLPAPAINGKQFPLKLGFTKTNELFVGRLAMVGFSASLIGEILTGKGALAQFGYETGLNGIEVDGLVIGLIAFNLIAAVLPTSQTFVPEEQDTISERPAGPLQDPRITLLEPKKFFGVQGFGFTKENELFVGRAAQLGFAFSLIGEAVTGKGALAQFDIETGLSLRDTEFGLVVFILFLLFAAINEGSGKFVDEESA.

The transit peptide at 1-25 directs the protein to the chloroplast; the sequence is MAMTLSTKAFAQRGVSARKNTVRVY. Transmembrane regions (helical) follow at residues 72-92, 108-128, 185-205, and 217-237; these read LFVGRLAMVGFSASLIGEILT, GIEVDGLVIGLIAFNLIAAVL, LGFAFSLIGEAVTGKGALAQF, and EFGLVVFILFLLFAAINEGSG.

Belongs to the ELIP/psbS family.

The protein resides in the plastid. It localises to the chloroplast thylakoid membrane. In terms of biological role, required for non-photochemical quenching (NPQ), a mechanism that converts and dissipates the harmful excess absorbed light energy into heat and protect the photosynthetic apparatus from photo-oxidative damage. Seems involved in the activation of NPQ, possibly by promoting conformational changes required for activation of LHCSR3-dependent quenching in the antenna of photosystem II (PSII). The chain is Photosystem II protein PSBS2 from Chlamydomonas reinhardtii (Chlamydomonas smithii).